The chain runs to 719 residues: Protein STRUBBELIG-RECEPTOR FAMILY 6 (719 aa).

Residues 1–29 form the signal peptide; sequence MRENWAVVALFTLCIVGFELRFIHGATDA. Topologically, residues 30–293 are extracellular; it reads SDTSALNTLF…SKKSGIGAGA (264 aa). 6 LRR repeats span residues 97–118, 119–140, 143–164, 167–190, 191–213, and 214–234; these read SLTE…QFPP, NLQR…SLSQ, PLKY…DFSK, SLTT…SSLT, SLKS…AGLP, and LETL…SLKG. A disordered region spans residues 242–287; the sequence is NSFNTGPAPPPPPGTPPIRGSPSRKSGGRESRSSDESTRNGDSKKS. The span at 248–257 shows a compositional bias: pro residues; it reads PAPPPPPGTP. Basic and acidic residues predominate over residues 268–286; sequence GGRESRSSDESTRNGDSKK. A helical transmembrane segment spans residues 294–314; it reads IAGIIISLLVVTALLVAFFLF. Residues 315–719 are Cytoplasmic-facing; the sequence is RRKKSKRSSP…GSADTTSDYM (405 aa). 2 disordered regions span residues 322 to 355 and 364 to 383; these read SSPM…SSVE and SINL…DEDS. Positions 332–354 are enriched in polar residues; that stretch reads NQPFTLASNDFHENNSIQSSSSV. S377 is modified (phosphoserine). One can recognise a Protein kinase domain in the interval 416–690; that stretch reads FSVDNLLGEG…SEVVQALVVL (275 aa). ATP contacts are provided by residues 422-430 and K444; that span reads LGEGTFGRV. Residues 700-719 are disordered; the sequence is TVGVDPSQRAGSADTTSDYM. Over residues 708–719 the composition is skewed to polar residues; that stretch reads RAGSADTTSDYM.

The protein belongs to the protein kinase superfamily. Ser/Thr protein kinase family. Expressed in seedlings, roots, stems, leaves, flowers and siliques.

It localises to the membrane. This is Protein STRUBBELIG-RECEPTOR FAMILY 6 (SRF6) from Arabidopsis thaliana (Mouse-ear cress).